Consider the following 705-residue polypeptide: Polyribonucleotide nucleotidyltransferase (705 aa).

Residues Asp-492 and Asp-498 each coordinate Mg(2+). The KH domain occupies 559–618; that stretch reads PLMITMKVSPDKIRHIIGPGGKIINKIIDETGVEIDIDDDGSVYILAQDQESGNRAKEII. The region spanning 628–696 is the S1 motif domain; the sequence is GDIYEGRVKK…ELGRINLSRK (69 aa).

It belongs to the polyribonucleotide nucleotidyltransferase family. Mg(2+) serves as cofactor.

It is found in the cytoplasm. The catalysed reaction is RNA(n+1) + phosphate = RNA(n) + a ribonucleoside 5'-diphosphate. Its function is as follows. Involved in mRNA degradation. Catalyzes the phosphorolysis of single-stranded polyribonucleotides processively in the 3'- to 5'-direction. This chain is Polyribonucleotide nucleotidyltransferase, found in Halothermothrix orenii (strain H 168 / OCM 544 / DSM 9562).